The chain runs to 381 residues: Queuine tRNA-ribosyltransferase (381 aa).

Catalysis depends on Asp92, which acts as the Proton acceptor. Residues 92 to 96, Asp146, Gln190, and Gly217 contribute to the substrate site; that span reads DSGGF. Residues 248–254 form an RNA binding region; it reads GVGRPED. The active-site Nucleophile is the Asp267. An RNA binding; important for wobble base 34 recognition region spans residues 272-276; sequence TRNAR. Zn(2+) is bound by residues Cys305, Cys307, Cys310, and His337.

The protein belongs to the queuine tRNA-ribosyltransferase family. Homodimer. Within each dimer, one monomer is responsible for RNA recognition and catalysis, while the other monomer binds to the replacement base PreQ1. Requires Zn(2+) as cofactor.

The catalysed reaction is 7-aminomethyl-7-carbaguanine + guanosine(34) in tRNA = 7-aminomethyl-7-carbaguanosine(34) in tRNA + guanine. It participates in tRNA modification; tRNA-queuosine biosynthesis. In terms of biological role, catalyzes the base-exchange of a guanine (G) residue with the queuine precursor 7-aminomethyl-7-deazaguanine (PreQ1) at position 34 (anticodon wobble position) in tRNAs with GU(N) anticodons (tRNA-Asp, -Asn, -His and -Tyr). Catalysis occurs through a double-displacement mechanism. The nucleophile active site attacks the C1' of nucleotide 34 to detach the guanine base from the RNA, forming a covalent enzyme-RNA intermediate. The proton acceptor active site deprotonates the incoming PreQ1, allowing a nucleophilic attack on the C1' of the ribose to form the product. After dissociation, two additional enzymatic reactions on the tRNA convert PreQ1 to queuine (Q), resulting in the hypermodified nucleoside queuosine (7-(((4,5-cis-dihydroxy-2-cyclopenten-1-yl)amino)methyl)-7-deazaguanosine). The sequence is that of Queuine tRNA-ribosyltransferase from Xanthomonas oryzae pv. oryzae (strain MAFF 311018).